The sequence spans 216 residues: Pyridoxine/pyridoxamine 5'-phosphate oxidase (216 aa).

Substrate is bound by residues Arg12–Tyr15 and Lys70. FMN-binding positions include Arg65 to Lys70, Tyr80 to Thr81, Arg86, Lys87, and Gln109. Substrate contacts are provided by Tyr127, Arg131, and Ser135. FMN contacts are provided by residues Gln144–Ser145 and Trp189. A substrate-binding site is contributed by Arg195 to His197. Arg199 is a binding site for FMN.

This sequence belongs to the pyridoxamine 5'-phosphate oxidase family. As to quaternary structure, homodimer. Requires FMN as cofactor.

It carries out the reaction pyridoxamine 5'-phosphate + O2 + H2O = pyridoxal 5'-phosphate + H2O2 + NH4(+). It catalyses the reaction pyridoxine 5'-phosphate + O2 = pyridoxal 5'-phosphate + H2O2. The protein operates within cofactor metabolism; pyridoxal 5'-phosphate salvage; pyridoxal 5'-phosphate from pyridoxamine 5'-phosphate: step 1/1. It participates in cofactor metabolism; pyridoxal 5'-phosphate salvage; pyridoxal 5'-phosphate from pyridoxine 5'-phosphate: step 1/1. Catalyzes the oxidation of either pyridoxine 5'-phosphate (PNP) or pyridoxamine 5'-phosphate (PMP) into pyridoxal 5'-phosphate (PLP). In Baumannia cicadellinicola subsp. Homalodisca coagulata, this protein is Pyridoxine/pyridoxamine 5'-phosphate oxidase.